The primary structure comprises 571 residues: Adenine deaminase (571 aa).

It belongs to the metallo-dependent hydrolases superfamily. Adenine deaminase family. The cofactor is Mn(2+).

It catalyses the reaction adenine + H2O + H(+) = hypoxanthine + NH4(+). This Dehalococcoides mccartyi (strain ATCC BAA-2266 / KCTC 15142 / 195) (Dehalococcoides ethenogenes (strain 195)) protein is Adenine deaminase.